A 319-amino-acid chain; its full sequence is D-alanine--D-alanine ligase (319 aa).

The region spanning 109-313 is the ATP-grasp domain; the sequence is KRVWLAEGLP…YEQLCLHILQ (205 aa). ATP is bound at residue 139-194; sequence PDDLGLPLIVKPPREGSSIGVTKVLGYSQMQDAVALSARHDPDVLCEEFIDGAEVT. Mg(2+)-binding residues include D266, E280, and N282.

It belongs to the D-alanine--D-alanine ligase family. Requires Mg(2+) as cofactor. Mn(2+) serves as cofactor.

Its subcellular location is the cytoplasm. The catalysed reaction is 2 D-alanine + ATP = D-alanyl-D-alanine + ADP + phosphate + H(+). It participates in cell wall biogenesis; peptidoglycan biosynthesis. Functionally, cell wall formation. The protein is D-alanine--D-alanine ligase of Methylibium petroleiphilum (strain ATCC BAA-1232 / LMG 22953 / PM1).